The primary structure comprises 538 residues: Syncytin-1 (538 aa).

An N-terminal signal peptide occupies residues 1–20 (MALPYHIFLFTVLLPSFTLT). Over 21–443 (APPPCRCMTS…NTGPWGLLSQ (423 aa)) the chain is Extracellular. Residue Asn169 is glycosylated (N-linked (GlcNAc...) asparagine). The CXXC signature appears at 186-189 (CWIC). Intrachain disulfides connect Cys186–Cys189, Cys186–Cys405, and Cys397–Cys404. N-linked (GlcNAc...) asparagine glycosylation is found at Asn208, Asn214, Asn234, Asn242, and Asn281. The segment at 320-340 (ILPFVIGAGVLGALGTGIGGI) is fusion peptide. Residues 380 to 396 (LQNRRALDLLTAERGGT) form an immunosuppression region. A CX6CC motif is present at residues 397–406 (CLFLGEECCY). Asn409 is a glycosylation site (N-linked (GlcNAc...) asparagine). A helical transmembrane segment spans residues 444-464 (WMPWILPFLGPLAAIILLLLF). The tract at residues 465 to 484 (GPCIFNLLVNFVSSRIEAVK) is essential for the fusiogenic function. Residues 465-538 (GPCIFNLLVN…LLRPNSAGSS (74 aa)) are Cytoplasmic-facing. Residues 496–538 (KIYRRPLDRPASPRSDVNDIKGTPPEEISAAQPLLRPNSAGSS) are disordered.

It belongs to the gamma type-C retroviral envelope protein family. HERV class-I W env subfamily. The mature envelope protein (Env) consists of a trimer of SU-TM heterodimers attached probably by a labile interchain disulfide bond. Interacts with the C-type lectin CD209/DC-SIGN. Specific enzymatic cleavages in vivo yield mature proteins. Envelope glycoproteins are synthesized as an inactive precursor that is heavily N-glycosylated and processed likely by furin in the Golgi to yield the mature SU and TM proteins. The cleavage site between SU and TM requires the minimal sequence [KR]-X-[KR]-R. The intracytoplasmic tail cleavage by the viral protease that is required for the fusiogenic activity of some retroviruses envelope proteins seems to have been lost during evolution. In terms of processing, the CXXC motif is highly conserved across a broad range of retroviral envelope proteins. It is thought to participate in the formation of a labile disulfide bond possibly with the CX6CC motif present in the transmembrane protein. Isomerization of the intersubunit disulfide bond to an SU intrachain disulfide bond is thought to occur upon receptor recognition in order to allow membrane fusion. In terms of tissue distribution, expressed at higher level in placental syncytiotrophoblast. Expressed at intermediate level in testis. Seems also to be found at low level in adrenal tissue, bone marrow, breast, colon, kidney, ovary, prostate, skin, spleen, thymus, thyroid, brain and trachea. Both mRNA and protein levels are significantly increased in the brain of individuals with multiple sclerosis, particularly in astrocytes and microglia.

It localises to the cell membrane. The protein resides in the virion. Functionally, this endogenous retroviral envelope protein has retained its original fusogenic properties and participates in trophoblast fusion and the formation of a syncytium during placenta morphogenesis. May induce fusion through binding of SLC1A4 and SLC1A5. Its function is as follows. Endogenous envelope proteins may have kept, lost or modified their original function during evolution. Retroviral envelope proteins mediate receptor recognition and membrane fusion during early infection. The surface protein (SU) mediates receptor recognition, while the transmembrane protein (TM) acts as a class I viral fusion protein. The protein may have at least 3 conformational states: pre-fusion native state, pre-hairpin intermediate state, and post-fusion hairpin state. During viral and target cell membrane fusion, the coiled coil regions (heptad repeats) assume a trimer-of-hairpins structure, positioning the fusion peptide in close proximity to the C-terminal region of the ectodomain. The formation of this structure appears to drive apposition and subsequent fusion of membranes. The polypeptide is Syncytin-1 (ERVW-1) (Homo sapiens (Human)).